A 951-amino-acid chain; its full sequence is UvrABC system protein A (951 aa).

33–40 contributes to the ATP binding site; that stretch reads GLSGSGKS. Residues 252–279 form a C4-type zinc finger; it reads CPICGFTVGELEPRLFSFNAPQGACPDC. ABC transporter domains lie at 309–587 and 607–935; these read WNPI…RKSL and GNGK…QYLK. Residue 639–646 coordinates ATP; sequence GVSGSGKS. Residues 738 to 764 form a C4-type zinc finger; that stretch reads CEACHGDGILKIEMNFLPDVFVPCEVC.

Belongs to the ABC transporter superfamily. UvrA family. As to quaternary structure, forms a heterotetramer with UvrB during the search for lesions.

Its subcellular location is the cytoplasm. Functionally, the UvrABC repair system catalyzes the recognition and processing of DNA lesions. UvrA is an ATPase and a DNA-binding protein. A damage recognition complex composed of 2 UvrA and 2 UvrB subunits scans DNA for abnormalities. When the presence of a lesion has been verified by UvrB, the UvrA molecules dissociate. The sequence is that of UvrABC system protein A from Lactiplantibacillus plantarum (strain ATCC BAA-793 / NCIMB 8826 / WCFS1) (Lactobacillus plantarum).